The following is a 415-amino-acid chain: tRNA(Ile)-lysidine synthase (415 aa).

36 to 41 contacts ATP; it reads SGGRDS.

It belongs to the tRNA(Ile)-lysidine synthase family.

The protein localises to the cytoplasm. The catalysed reaction is cytidine(34) in tRNA(Ile2) + L-lysine + ATP = lysidine(34) in tRNA(Ile2) + AMP + diphosphate + H(+). Functionally, ligates lysine onto the cytidine present at position 34 of the AUA codon-specific tRNA(Ile) that contains the anticodon CAU, in an ATP-dependent manner. Cytidine is converted to lysidine, thus changing the amino acid specificity of the tRNA from methionine to isoleucine. This chain is tRNA(Ile)-lysidine synthase, found in Tropheryma whipplei (strain Twist) (Whipple's bacillus).